Consider the following 328-residue polypeptide: Malate dehydrogenase (328 aa).

Residue 11 to 17 (GAAGQIG) participates in NAD(+) binding. Substrate is bound by residues R94 and R100. Residues N107, Q114, and 131–133 (VGN) contribute to the NAD(+) site. Substrate-binding residues include N133 and R164. The Proton acceptor role is filled by H189.

This sequence belongs to the LDH/MDH superfamily. MDH type 2 family.

The catalysed reaction is (S)-malate + NAD(+) = oxaloacetate + NADH + H(+). Its function is as follows. Catalyzes the reversible oxidation of malate to oxaloacetate. This is Malate dehydrogenase from Stenotrophomonas maltophilia (strain K279a).